A 467-amino-acid chain; its full sequence is 3-isopropylmalate dehydratase large subunit (467 aa).

Residues Cys347, Cys407, and Cys410 each coordinate [4Fe-4S] cluster.

Belongs to the aconitase/IPM isomerase family. LeuC type 1 subfamily. Heterodimer of LeuC and LeuD. It depends on [4Fe-4S] cluster as a cofactor.

It carries out the reaction (2R,3S)-3-isopropylmalate = (2S)-2-isopropylmalate. It participates in amino-acid biosynthesis; L-leucine biosynthesis; L-leucine from 3-methyl-2-oxobutanoate: step 2/4. Catalyzes the isomerization between 2-isopropylmalate and 3-isopropylmalate, via the formation of 2-isopropylmaleate. The sequence is that of 3-isopropylmalate dehydratase large subunit from Crocosphaera subtropica (strain ATCC 51142 / BH68) (Cyanothece sp. (strain ATCC 51142)).